The chain runs to 505 residues: Maturase K (505 aa).

Belongs to the intron maturase 2 family. MatK subfamily.

The protein localises to the plastid. The protein resides in the chloroplast. In terms of biological role, usually encoded in the trnK tRNA gene intron. Probably assists in splicing its own and other chloroplast group II introns. The sequence is that of Maturase K from Beta vulgaris (Sugar beet).